The chain runs to 94 residues: Small ribosomal subunit protein bS6 (94 aa).

Belongs to the bacterial ribosomal protein bS6 family.

Binds together with bS18 to 16S ribosomal RNA. This is Small ribosomal subunit protein bS6 from Clostridium botulinum (strain 657 / Type Ba4).